Reading from the N-terminus, the 961-residue chain is FYVE, RhoGEF and PH domain-containing protein 1 (961 aa).

The span at 1 to 11 shows a compositional bias: gly residues; that stretch reads MHGHRAPGGAG. The interval 1–353 is disordered; that stretch reads MHGHRAPGGA…DEEEEEEKDR (353 aa). Over residues 27–38 the composition is skewed to low complexity; it reads PPACADSDPGAS. The residue at position 48 (S48) is a Phosphoserine. Residues 125 to 135 show a composition bias toward basic and acidic residues; sequence PHPEGPQRLRS. Pro residues-rich tracts occupy residues 156-165 and 172-190; these read GPKPQVPPKP and RMPP…PLPA. Residues 171-187 carry the SH3-binding motif; it reads PRMPPPLEPIPPPPSRP. Over residues 199 to 213 the composition is skewed to low complexity; sequence APRAEASPSSAAVSS. At S205 the chain carries Phosphoserine. Residues 231–255 are compositionally biased toward pro residues; sequence VPGPSPGPPEPVMLPQPTSQPPVPQ. Basic and acidic residues predominate over residues 273 to 284; that stretch reads RDGEKVPNRDSG. Low complexity-rich tracts occupy residues 285–294 and 316–325; these read IDSISSPSNS and ALASVPVALA. Over residues 335 to 351 the composition is skewed to acidic residues; the sequence is VDSDLEEEDDEEEEEEK. Residues 373–561 form the DH domain; that stretch reads KVFHIANELL…ATAAEHSNAA (189 aa). Residues 590–689 enclose the PH 1 domain; that stretch reads ELIKEGHILK…WVQAINSTLL (100 aa). Residues 702–726 are disordered; that stretch reads NSTNREDEDTPPNSPNVDLGKRAPT. T711 bears the Phosphothreonine mark. S715 bears the Phosphoserine mark. The FYVE-type zinc finger occupies 730 to 790; sequence EKEVTMCMRC…VCTDCYVALH (61 aa). Zn(2+) contacts are provided by C736, C739, C753, C756, C761, C764, C782, and C785. The region spanning 821–921 is the PH 2 domain; it reads NSVICSFLHY…WMAVLGRAGR (101 aa). The segment at 925–961 is disordered; sequence FCPGPTLSEDREMEEAPVAALGATAEPPESPQTRDKT.

In terms of assembly, interacts with DBNL/ABP1 and CTTN. May interact with CCPG1. Binds CDC42. As to expression, expressed in fetal heart, brain, lung, kidney and placenta. Less expressed in liver; adult heart, brain, lung, pancreas and skeletal muscle.

It is found in the cytoplasm. The protein localises to the cell projection. The protein resides in the lamellipodium. Its subcellular location is the ruffle. It localises to the cytoskeleton. In terms of biological role, activates CDC42, a member of the Ras-like family of Rho- and Rac proteins, by exchanging bound GDP for free GTP. Plays a role in regulating the actin cytoskeleton and cell shape. The chain is FYVE, RhoGEF and PH domain-containing protein 1 (FGD1) from Homo sapiens (Human).